Consider the following 125-residue polypeptide: Large ribosomal subunit protein bL17 (125 aa).

This sequence belongs to the bacterial ribosomal protein bL17 family. As to quaternary structure, part of the 50S ribosomal subunit. Contacts protein L32.

This is Large ribosomal subunit protein bL17 from Acinetobacter baumannii (strain AB0057).